Consider the following 155-residue polypeptide: Small ribosomal subunit protein uS7c (155 aa).

Belongs to the universal ribosomal protein uS7 family. As to quaternary structure, part of the 30S ribosomal subunit.

The protein resides in the plastid. It localises to the chloroplast. In terms of biological role, one of the primary rRNA binding proteins, it binds directly to 16S rRNA where it nucleates assembly of the head domain of the 30S subunit. In Canella winterana (Wild cinnamon), this protein is Small ribosomal subunit protein uS7c (rps7).